Here is a 582-residue protein sequence, read N- to C-terminus: TRAF-type zinc finger domain-containing protein 1 (582 aa).

At Ala2 the chain carries N-acetylalanine. The segment at 27 to 103 (IHEIHCQRNI…DLELSILKLK (77 aa)) adopts a TRAF-type zinc-finger fold. Ser191 bears the Phosphoserine mark. Residues 216–238 (EEQERQERNRGQQPPKEGGEDGA) form a disordered region. Phosphoserine is present on residues Ser278, Ser320, Ser326, Ser327, Ser409, Ser415, Ser430, and Ser470. 2 disordered regions span residues 402 to 509 (EGIP…IAPG) and 522 to 582 (PENI…EEEE). Polar residues-rich tracts occupy residues 454 to 471 (PFNNMTATYNQLSRSTSG) and 486 to 504 (LNNSDSQDIQGRNQNSQNG).

As to quaternary structure, interacts with MAVS, TICAM1, TRAF1, TRAF2, TRAF3 and TRAF6.

Functionally, negative feedback regulator that controls excessive innate immune responses. Regulates both Toll-like receptor 4 (TLR4) and DDX58/RIG1-like helicases (RLH) pathways. May inhibit the LTR pathway by direct interaction with TRAF6 and attenuation of NF-kappa-B activation. May negatively regulate the RLH pathway downstream from MAVS and upstream of NF-kappa-B and IRF3. In Macaca fascicularis (Crab-eating macaque), this protein is TRAF-type zinc finger domain-containing protein 1 (TRAFD1).